A 602-amino-acid chain; its full sequence is Elongation factor 4 (602 aa).

A tr-type G domain is found at 6-188 (RNVRNFSIIA…RITEVVPEPA (183 aa)). GTP-binding positions include 18-23 (DHGKST) and 135-138 (NKID).

It belongs to the TRAFAC class translation factor GTPase superfamily. Classic translation factor GTPase family. LepA subfamily.

It localises to the cell membrane. It catalyses the reaction GTP + H2O = GDP + phosphate + H(+). In terms of biological role, required for accurate and efficient protein synthesis under certain stress conditions. May act as a fidelity factor of the translation reaction, by catalyzing a one-codon backward translocation of tRNAs on improperly translocated ribosomes. Back-translocation proceeds from a post-translocation (POST) complex to a pre-translocation (PRE) complex, thus giving elongation factor G a second chance to translocate the tRNAs correctly. Binds to ribosomes in a GTP-dependent manner. In Oceanobacillus iheyensis (strain DSM 14371 / CIP 107618 / JCM 11309 / KCTC 3954 / HTE831), this protein is Elongation factor 4.